The primary structure comprises 455 residues: Serine--tRNA ligase (455 aa).

252–254 contributes to the L-serine binding site; it reads TAE. ATP-binding positions include 283–285 and V299; that span reads RKE. Residue E306 participates in L-serine binding. 370-373 contributes to the ATP binding site; sequence EVVS. T406 is an L-serine binding site.

Belongs to the class-II aminoacyl-tRNA synthetase family. Type-1 seryl-tRNA synthetase subfamily. Homodimer. The tRNA molecule binds across the dimer.

The protein localises to the cytoplasm. It carries out the reaction tRNA(Ser) + L-serine + ATP = L-seryl-tRNA(Ser) + AMP + diphosphate + H(+). It catalyses the reaction tRNA(Sec) + L-serine + ATP = L-seryl-tRNA(Sec) + AMP + diphosphate + H(+). It functions in the pathway aminoacyl-tRNA biosynthesis; selenocysteinyl-tRNA(Sec) biosynthesis; L-seryl-tRNA(Sec) from L-serine and tRNA(Sec): step 1/1. Functionally, catalyzes the attachment of serine to tRNA(Ser). Is also able to aminoacylate tRNA(Sec) with serine, to form the misacylated tRNA L-seryl-tRNA(Sec), which will be further converted into selenocysteinyl-tRNA(Sec). This chain is Serine--tRNA ligase, found in Thermococcus gammatolerans (strain DSM 15229 / JCM 11827 / EJ3).